Here is a 163-residue protein sequence, read N- to C-terminus: Nucleotide-binding protein APJL_1242 (163 aa).

The protein belongs to the YajQ family.

Functionally, nucleotide-binding protein. This chain is Nucleotide-binding protein APJL_1242, found in Actinobacillus pleuropneumoniae serotype 3 (strain JL03).